We begin with the raw amino-acid sequence, 575 residues long: Acetolactate synthase large subunit (575 aa).

Thiamine diphosphate is bound at residue Glu57. Residues Arg159, 265–286 (HGSY…LGSR), and 308–327 (DIDA…ILSD) each bind FAD. The thiamine pyrophosphate binding stretch occupies residues 395-475 (QHQMWVAQYY…IKVVLINNHS (81 aa)). Mg(2+)-binding residues include Asp446 and Asn473.

Belongs to the TPP enzyme family. Dimer of large and small chains. Mg(2+) is required as a cofactor. The cofactor is thiamine diphosphate.

The catalysed reaction is 2 pyruvate + H(+) = (2S)-2-acetolactate + CO2. The protein operates within amino-acid biosynthesis; L-isoleucine biosynthesis; L-isoleucine from 2-oxobutanoate: step 1/4. It functions in the pathway amino-acid biosynthesis; L-valine biosynthesis; L-valine from pyruvate: step 1/4. The polypeptide is Acetolactate synthase large subunit (ilvB) (Lactococcus lactis subsp. lactis (strain IL1403) (Streptococcus lactis)).